A 766-amino-acid chain; its full sequence is Serine/threonine-protein kinase tousled-like 1 (766 aa).

The segment at 1-198 is disordered; the sequence is MSVQSSSGSL…PSPTALAFGD (198 aa). Low complexity predominate over residues 20-33; that stretch reads STSPTPGSAAAARS. A Phosphothreonine modification is found at T38. Over residues 43 to 64 the composition is skewed to basic and acidic residues; sequence RPREGAMDELHSLDPRRQELLE. A phosphoserine mark is found at S54, S77, and S80. A compositionally biased stretch (low complexity) spans 68-85; that stretch reads TGVATGSTGSTGSCSVGA. Over residues 87–103 the composition is skewed to polar residues; the sequence is ASTNNESSNHSFGSLGS. Positions 105–121 are enriched in basic and acidic residues; sequence SDKESETPEKKQSESSR. S134, S159, S174, and S176 each carry phosphoserine. A compositionally biased stretch (low complexity) spans 170 to 192; it reads SPQNSHSHSTPSSSVRPNSPSPT. Positions 229-280 form a coiled coil; it reads NQDLEKKEGRIDDLLRANCDLRRQIDDQQKLLEKYKERLNKCISMSKKLLIE. The interval 344–381 is disordered; sequence KLLGKRKPPTANNSQAPATNSEAKQRKTKAVNGAENDP. Polar residues predominate over residues 353-365; the sequence is TANNSQAPATNSE. Residues 397–445 adopt a coiled-coil conformation; that stretch reads HEQEEIFKLRLGHLKKEEAEIQAELERLERVRNLHIRELKRINNEDNSQ. One can recognise a Protein kinase domain in the interval 456 to 734; that stretch reads YLLLHLLGRG…VHQLANDPYL (279 aa). ATP is bound by residues 462–470 and K485; that span reads LGRGGFSEV. The Proton acceptor role is filled by D586. The residue at position 743 (S743) is a Phosphoserine. The interval 745–766 is disordered; that stretch reads GNLHMSGLTATPTPPSSSIITY.

It belongs to the protein kinase superfamily. Ser/Thr protein kinase family. As to quaternary structure, heterodimer with TLK2. Mg(2+) serves as cofactor. Ubiquitously expressed in all tissues examined.

It localises to the nucleus. It catalyses the reaction L-seryl-[protein] + ATP = O-phospho-L-seryl-[protein] + ADP + H(+). The catalysed reaction is L-threonyl-[protein] + ATP = O-phospho-L-threonyl-[protein] + ADP + H(+). Cell-cycle regulated, maximal activity in S-phase. Inactivated by phosphorylation at Ser-743, potentially by CHEK1. Rapidly and transiently inhibited by phosphorylation following the generation of DNA double-stranded breaks during S-phase. This is cell cycle checkpoint and ATM-pathway dependent and appears to regulate processes involved in chromatin assembly. Isoform 3 protects the cells from the ionizing radiation by facilitating the repair of DSBs. In vitro, phosphorylates histone H3 at 'Ser-10'. This is Serine/threonine-protein kinase tousled-like 1 (Tlk1) from Mus musculus (Mouse).